We begin with the raw amino-acid sequence, 206 residues long: 2,3-bisphosphoglycerate-dependent phosphoglycerate mutase (206 aa).

Substrate is bound by residues 9 to 16, 22 to 23, Arg-61, 88 to 91, Lys-99, 115 to 116, and 159 to 160; these read RHGQSEWN, TG, ERDY, RR, and GN. The active-site Tele-phosphohistidine intermediate is the His-10. Catalysis depends on Glu-88, which acts as the Proton donor/acceptor.

It belongs to the phosphoglycerate mutase family. BPG-dependent PGAM subfamily. Homodimer.

It catalyses the reaction (2R)-2-phosphoglycerate = (2R)-3-phosphoglycerate. Its pathway is carbohydrate degradation; glycolysis; pyruvate from D-glyceraldehyde 3-phosphate: step 3/5. Functionally, catalyzes the interconversion of 2-phosphoglycerate and 3-phosphoglycerate. The chain is 2,3-bisphosphoglycerate-dependent phosphoglycerate mutase from Brucella melitensis biotype 2 (strain ATCC 23457).